A 106-amino-acid chain; its full sequence is Integration host factor subunit alpha (106 aa).

Belongs to the bacterial histone-like protein family. As to quaternary structure, heterodimer of an alpha and a beta chain.

Functionally, this protein is one of the two subunits of integration host factor, a specific DNA-binding protein that functions in genetic recombination as well as in transcriptional and translational control. This Paramagnetospirillum magneticum (strain ATCC 700264 / AMB-1) (Magnetospirillum magneticum) protein is Integration host factor subunit alpha.